Reading from the N-terminus, the 260-residue chain is Thiazole synthase (260 aa).

Lysine 102 serves as the catalytic Schiff-base intermediate with DXP. Residues glycine 163, 189–190 (AG), and 211–212 (NT) each bind 1-deoxy-D-xylulose 5-phosphate.

This sequence belongs to the ThiG family. In terms of assembly, homotetramer. Forms heterodimers with either ThiH or ThiS.

The protein localises to the cytoplasm. It catalyses the reaction [ThiS sulfur-carrier protein]-C-terminal-Gly-aminoethanethioate + 2-iminoacetate + 1-deoxy-D-xylulose 5-phosphate = [ThiS sulfur-carrier protein]-C-terminal Gly-Gly + 2-[(2R,5Z)-2-carboxy-4-methylthiazol-5(2H)-ylidene]ethyl phosphate + 2 H2O + H(+). The protein operates within cofactor biosynthesis; thiamine diphosphate biosynthesis. Its function is as follows. Catalyzes the rearrangement of 1-deoxy-D-xylulose 5-phosphate (DXP) to produce the thiazole phosphate moiety of thiamine. Sulfur is provided by the thiocarboxylate moiety of the carrier protein ThiS. In vitro, sulfur can be provided by H(2)S. The sequence is that of Thiazole synthase from Geobacter sp. (strain M21).